A 200-amino-acid chain; its full sequence is Dephospho-CoA kinase (200 aa).

The region spanning 4-200 (VIGLTGGIAS…VILKKWNIID (197 aa)) is the DPCK domain. 12–17 (ASGKST) lines the ATP pocket.

The protein belongs to the CoaE family.

It is found in the cytoplasm. It carries out the reaction 3'-dephospho-CoA + ATP = ADP + CoA + H(+). Its pathway is cofactor biosynthesis; coenzyme A biosynthesis; CoA from (R)-pantothenate: step 5/5. Functionally, catalyzes the phosphorylation of the 3'-hydroxyl group of dephosphocoenzyme A to form coenzyme A. This chain is Dephospho-CoA kinase, found in Bacillus cereus (strain ATCC 14579 / DSM 31 / CCUG 7414 / JCM 2152 / NBRC 15305 / NCIMB 9373 / NCTC 2599 / NRRL B-3711).